A 138-amino-acid polypeptide reads, in one-letter code: MKNTFLYFRWEDLHGEIGVDSFNLLRASYSNLSEQQLVELIKELISIEREDIAAKFDIHLSENAPVFDERQHVVYKGVAGDMNYKDMLLSLVTALDLTNTLDHVQNILSLAKCLRSFDREIFARFAKDIAEEVYYSLK.

This is SPbeta prophage-derived uncharacterized protein YopJ (yopJ) from Bacillus subtilis (strain 168).